A 188-amino-acid chain; its full sequence is Threonylcarbamoyl-AMP synthase (188 aa).

One can recognise a YrdC-like domain in the interval 8-188 (EGAQPGLHAY…DLATGKILRA (181 aa)).

This sequence belongs to the SUA5 family. TsaC subfamily.

The protein resides in the cytoplasm. It catalyses the reaction L-threonine + hydrogencarbonate + ATP = L-threonylcarbamoyladenylate + diphosphate + H2O. In terms of biological role, required for the formation of a threonylcarbamoyl group on adenosine at position 37 (t(6)A37) in tRNAs that read codons beginning with adenine. Catalyzes the conversion of L-threonine, HCO(3)(-)/CO(2) and ATP to give threonylcarbamoyl-AMP (TC-AMP) as the acyladenylate intermediate, with the release of diphosphate. The polypeptide is Threonylcarbamoyl-AMP synthase (Thiobacillus denitrificans (strain ATCC 25259 / T1)).